Consider the following 524-residue polypeptide: 2,3-bisphosphoglycerate-independent phosphoglycerate mutase (524 aa).

Residues aspartate 13 and serine 63 each coordinate Mn(2+). The active-site Phosphoserine intermediate is serine 63. Substrate contacts are provided by residues histidine 124, 154–155 (RD), arginine 186, arginine 192, 262–265 (RADR), and lysine 337. Residues aspartate 404, histidine 408, aspartate 445, histidine 446, and histidine 464 each contribute to the Mn(2+) site.

It belongs to the BPG-independent phosphoglycerate mutase family. In terms of assembly, monomer. Mn(2+) serves as cofactor.

The catalysed reaction is (2R)-2-phosphoglycerate = (2R)-3-phosphoglycerate. It functions in the pathway carbohydrate degradation; glycolysis; pyruvate from D-glyceraldehyde 3-phosphate: step 3/5. In terms of biological role, catalyzes the interconversion of 2-phosphoglycerate and 3-phosphoglycerate. This chain is 2,3-bisphosphoglycerate-independent phosphoglycerate mutase, found in Thermomicrobium roseum (strain ATCC 27502 / DSM 5159 / P-2).